The chain runs to 2136 residues: Protein CELLULOSE SYNTHASE INTERACTIVE 3 (2136 aa).

42 ARM repeats span residues Met27 to Ile66, Arg71 to Lys111, Lys113 to Ser152, His159 to Gly201, Asp204 to Leu243, Cys246 to Ala286, Asp289 to Gly337, Pro376 to Gly417, Ser419 to His458, Val461 to Ala500, Asp503 to Cys542, Glu545 to His584, Ala586 to Ser618, Lys619 to Ser663, Gln666 to Arg705, Asn711 to Ser750, Pro752 to Lys791, Ser811 to Pro848, Pro849 to Ser887, Gln936 to Glu980, Ser1013 to Ser1041, Ala1042 to Val1083, Arg1109 to Lys1149, Glu1163 to Asp1204, Asp1207 to Ser1247, His1249 to Asp1288, Glu1290 to Ser1329, Ser1333 to Ser1375, Lys1377 to Asp1416, Glu1418 to Lys1457, Val1460 to Asn1499, Ala1518 to Thr1546, Leu1547 to Thr1585, Glu1587 to Ala1626, Trp1628 to Gln1669, Tyr1670 to Leu1704, Ala1710 to Arg1750, Ser1790 to Met1833, Arg1836 to Ser1875, Pro1921 to His1960, Val1969 to Gly2008, and Leu2010 to Ile2035. The C2 domain maps to Lys1989 to Leu2106.

In terms of assembly, associates with cellulase synthase (CESA) complexes. Binds to cortical microtubules. Interacts with CESA3 and CESA6. As to expression, expressed in dark-grown hypocotyls, leaves (confined to vasculature and trichomes), stamen, pollen, developing siliques, and roots. Restricted in meristematic tissue of the shoot and root. Present in distinct punctae at the cell cortex, called microtubule-associated cellulose synthase compartments, that move with constant velocities of 10 to 3000 nm/min.

Its subcellular location is the cell membrane. The protein localises to the cytoplasm. It localises to the cytoskeleton. The protein resides in the endomembrane system. In terms of biological role, regulator of the microtubular cytoskeleton. Microtubule-associated protein involved in the association of cellulase synthase (CESA) complexes (CSCs) and cortical microtubules. Promotes dynamics of CSCs in the plasma membrane in both microtubules-dependent and microtubules-independent manners. Regulates primary cell wall biosynthesis and cellulose microfibrils organization. The chain is Protein CELLULOSE SYNTHASE INTERACTIVE 3 from Arabidopsis thaliana (Mouse-ear cress).